The chain runs to 332 residues: Oligopeptide transport ATP-binding protein OppF (332 aa).

Residues 23-264 (KNDKSLFFAK…TKHPYTKALM (242 aa)) form the ABC transporter domain. Residue 56-63 (GESGCGKS) participates in ATP binding.

Belongs to the ABC transporter superfamily. The complex is composed of two ATP-binding proteins (OppD and OppF), two transmembrane proteins (OppB and OppC) and a solute-binding protein (OppA).

It localises to the cell inner membrane. It catalyses the reaction a [peptide](out) + ATP + H2O = a [peptide](in) + ADP + phosphate + H(+). Part of the ABC transporter complex OppABCDF involved in the uptake of oligopeptides. Probably responsible for energy coupling to the transport system. The sequence is that of Oligopeptide transport ATP-binding protein OppF (oppF) from Haemophilus influenzae (strain ATCC 51907 / DSM 11121 / KW20 / Rd).